The primary structure comprises 772 residues: Ribosomal protein S6 kinase alpha-4 (772 aa).

One can recognise a Protein kinase 1 domain in the interval 33-301 (FELLKVLGTG…AQEVRNHPFF (269 aa)). ATP is bound by residues 39–47 (LGTGAYGKV) and Lys65. Asp161 functions as the Proton acceptor in the catalytic mechanism. Ser196 carries the phosphoserine; by autocatalysis modification. One can recognise an AGC-kinase C-terminal domain in the interval 302–371 (QGLDWVALAA…VAPSILFDHN (70 aa)). Position 343 is a phosphoserine; by MAPK1, MAPK3 and MAPK14 (Ser343). Phosphoserine is present on Ser347. Phosphoserine; by autocatalysis occurs at positions 360 and 365. The region spanning 411–674 (DLREPALGQG…LEGLRGSSWL (264 aa)) is the Protein kinase 2 domain. ATP is bound by residues 417–425 (LGQGSFSVC) and Lys440. Asp530 serves as the catalytic Proton acceptor. Thr542 is subject to Phosphothreonine. Thr568 carries the phosphothreonine; by MAPK1, MAPK3 and MAPK14 modification. A phosphoserine mark is found at Ser634 and Ser678. Disordered regions lie at residues 673–696 (WLQD…SSGP) and 728–772 (AKRR…LPPS). Thr687 carries the phosphothreonine modification. A required for nuclear targeting and association with MAPK14 region spans residues 725–772 (APLAKRRKQKLRSATASRRGSPAPANPGRAPVASKGAPRRANGPLPPS). Ser737 carries the phosphoserine; by autocatalysis modification. The residue at position 745 (Ser745) is a Phosphoserine.

It belongs to the protein kinase superfamily. AGC Ser/Thr protein kinase family. S6 kinase subfamily. Forms a complex with either MAPK1/ERK2 or MAPK3/ERK1 in quiescent cells which transiently dissociates following mitogenic stimulation. Also associates with MAPK14/p38-alpha. Activated RPS6KA4 associates with and phosphorylates the NF-kappa-B p65 subunit RELA. Mg(2+) is required as a cofactor. In terms of processing, ser-343 and Thr-568 phosphorylation is required for kinase activity. Ser-343 and Ser-196 are autophosphorylated by the C-terminal kinase domain, and their phosphorylation is essential for the catalytic activity of the N-terminal kinase domain. Phosphorylated at Ser-343, Thr-568 and Thr-687 by MAPK1/ERK2, MAPK3/ERK1 and MAPK14/p38-alpha. Autophosphorylated at Ser-737 and Ser-745 by the N-terminal kinase domain.

It localises to the nucleus. The catalysed reaction is L-seryl-[protein] + ATP = O-phospho-L-seryl-[protein] + ADP + H(+). It carries out the reaction L-threonyl-[protein] + ATP = O-phospho-L-threonyl-[protein] + ADP + H(+). Activated by phosphorylation at Ser-343, Thr-568 and Thr-687 by MAPK1/ERK2, MAPK3/ERK1 and MAPK14/p38-alpha, and by further autophosphorylation of Ser-196, Ser-360 and Ser-365 by the activated C-terminal kinase domain. Functionally, serine/threonine-protein kinase that is required for the mitogen or stress-induced phosphorylation of the transcription factors CREB1 and ATF1 and for the regulation of the transcription factor RELA, and that contributes to gene activation by histone phosphorylation and functions in the regulation of inflammatory genes. Phosphorylates CREB1 and ATF1 in response to mitogenic or stress stimuli such as UV-C irradiation, epidermal growth factor (EGF) and anisomycin. Plays an essential role in the control of RELA transcriptional activity in response to TNF. Phosphorylates 'Ser-10' of histone H3 in response to mitogenics, stress stimuli and EGF, which results in the transcriptional activation of several immediate early genes, including proto-oncogenes c-fos/FOS and c-jun/JUN. May also phosphorylate 'Ser-28' of histone H3. Mediates the mitogen- and stress-induced phosphorylation of high mobility group protein 1 (HMGN1/HMG14). In lipopolysaccharide-stimulated primary macrophages, acts downstream of the Toll-like receptor TLR4 to limit the production of pro-inflammatory cytokines. Functions probably by inducing transcription of the MAP kinase phosphatase DUSP1 and the anti-inflammatory cytokine interleukin 10 (IL10), via CREB1 and ATF1 transcription factors. The chain is Ribosomal protein S6 kinase alpha-4 (RPS6KA4) from Homo sapiens (Human).